The chain runs to 81 residues: MSGYVCKTDILRMLSDIEDELTRAEQSLNHSVNALEAEMRETENDRLSVLEEEIIDLHICINELYQSPEHRYAFEKVYRIG.

This is an uncharacterized protein from Bacillus subtilis (strain 168).